Consider the following 969-residue polypeptide: Squamosa promoter-binding-like protein 6 (969 aa).

Disordered regions lie at residues 1–25 and 54–81; these read MEAA…DMDR and EASG…VNAR. The segment covering 55–74 has biased composition (low complexity); sequence ASGLALNSSPSSSEEAGAAS. The SBP-type zinc finger occupies 149-226; sequence GPACQVEGCT…AGHNRRRRKT (78 aa). Zn(2+) contacts are provided by Cys152, Cys157, Cys174, His177, Cys193, Cys196, His200, and Cys212. The Bipartite nuclear localization signal motif lies at 209–225; it reads KRSCRRRLAGHNRRRRK. The disordered stretch occupies residues 377–434; it reads GMEGFEDGYEGSPTPAFKTTDSPNCPSWMHQDSTQSPPQTSGNSDSTSAQSLSSSNGD. A compositionally biased stretch (polar residues) spans 393-419; it reads FKTTDSPNCPSWMHQDSTQSPPQTSGN. The span at 420-431 shows a compositional bias: low complexity; that stretch reads SDSTSAQSLSSS.

As to expression, ubiquitous.

It localises to the nucleus. Trans-acting factor that binds specifically to the consensus nucleotide sequence 5'-TNCGTACAA-3'. This is Squamosa promoter-binding-like protein 6 (SPL6) from Oryza sativa subsp. japonica (Rice).